Here is a 336-residue protein sequence, read N- to C-terminus: UPF0284 protein PYRAB00380 (336 aa).

Belongs to the UPF0284 family.

The sequence is that of UPF0284 protein PYRAB00380 from Pyrococcus abyssi (strain GE5 / Orsay).